The primary structure comprises 551 residues: Glucans biosynthesis protein D (551 aa).

The segment at residues 1-32 (MDRRRFIKGSMAMAAVCGTSGIASLFSQAAFA) is a signal peptide (tat-type signal).

This sequence belongs to the OpgD/OpgG family. In terms of processing, predicted to be exported by the Tat system. The position of the signal peptide cleavage has not been experimentally proven.

It localises to the periplasm. Its pathway is glycan metabolism; osmoregulated periplasmic glucan (OPG) biosynthesis. Probably involved in the control of the structural glucose backbone of osmoregulated periplasmic glucans (OPGs). This Escherichia coli (strain K12 / MC4100 / BW2952) protein is Glucans biosynthesis protein D.